Reading from the N-terminus, the 244-residue chain is Proteasome subunit alpha 2 (244 aa).

The protein belongs to the peptidase T1A family. As to quaternary structure, the 20S proteasome core is composed of 14 alpha and 14 beta subunits that assemble into four stacked heptameric rings, resulting in a barrel-shaped structure. The two inner rings, each composed of seven catalytic beta subunits, are sandwiched by two outer rings, each composed of seven alpha subunits. The catalytic chamber with the active sites is on the inside of the barrel. Has a gated structure, the ends of the cylinder being occluded by the N-termini of the alpha-subunits. Is capped at one or both ends by the proteasome regulatory ATPase, PAN.

It localises to the cytoplasm. With respect to regulation, the formation of the proteasomal ATPase PAN-20S proteasome complex, via the docking of the C-termini of PAN into the intersubunit pockets in the alpha-rings, triggers opening of the gate for substrate entry. Interconversion between the open-gate and close-gate conformations leads to a dynamic regulation of the 20S proteasome proteolysis activity. In terms of biological role, component of the proteasome core, a large protease complex with broad specificity involved in protein degradation. The polypeptide is Proteasome subunit alpha 2 (Haloarcula marismortui (strain ATCC 43049 / DSM 3752 / JCM 8966 / VKM B-1809) (Halobacterium marismortui)).